Here is a 199-residue protein sequence, read N- to C-terminus: Imidazoleglycerol-phosphate dehydratase (199 aa).

The protein belongs to the imidazoleglycerol-phosphate dehydratase family.

It localises to the cytoplasm. The enzyme catalyses D-erythro-1-(imidazol-4-yl)glycerol 3-phosphate = 3-(imidazol-4-yl)-2-oxopropyl phosphate + H2O. The protein operates within amino-acid biosynthesis; L-histidine biosynthesis; L-histidine from 5-phospho-alpha-D-ribose 1-diphosphate: step 6/9. This chain is Imidazoleglycerol-phosphate dehydratase, found in Paramagnetospirillum magneticum (strain ATCC 700264 / AMB-1) (Magnetospirillum magneticum).